A 135-amino-acid chain; its full sequence is Meiotically up-regulated gene 116 protein (135 aa).

The chain crosses the membrane as a helical span at residues 20-39 (YFHSFHCFFLLCFTVMLCVV). Positions 81–101 (QTPTKKGNKTKKKRKKEKKKE) are disordered. The span at 86–98 (KGNKTKKKRKKEK) shows a compositional bias: basic residues.

The protein localises to the mitochondrion membrane. Has a role in meiosis. This is Meiotically up-regulated gene 116 protein (mug116) from Schizosaccharomyces pombe (strain 972 / ATCC 24843) (Fission yeast).